The primary structure comprises 608 residues: Protein FAM151A (608 aa).

The helical transmembrane segment at 14–34 threads the bilayer; that stretch reads WILAGSVSMTLVLAISMILGL. Residues 588-608 form a disordered region; sequence RHRPSSRTGPSYVEGFPGESR.

Belongs to the menorin family.

The protein resides in the membrane. This Rattus norvegicus (Rat) protein is Protein FAM151A (Fam151a).